Consider the following 398-residue polypeptide: 1-deoxy-D-xylulose 5-phosphate reductoisomerase (398 aa).

Residues threonine 11, glycine 12, serine 13, isoleucine 14, and asparagine 125 each contribute to the NADPH site. Lysine 126 lines the 1-deoxy-D-xylulose 5-phosphate pocket. NADPH is bound at residue glutamate 127. Aspartate 151 contacts Mn(2+). 1-deoxy-D-xylulose 5-phosphate is bound by residues serine 152, glutamate 153, serine 186, and histidine 209. Position 153 (glutamate 153) interacts with Mn(2+). Glycine 215 contacts NADPH. 4 residues coordinate 1-deoxy-D-xylulose 5-phosphate: serine 222, asparagine 227, lysine 228, and glutamate 231. Residue glutamate 231 coordinates Mn(2+).

It belongs to the DXR family. Requires Mg(2+) as cofactor. Mn(2+) serves as cofactor.

It catalyses the reaction 2-C-methyl-D-erythritol 4-phosphate + NADP(+) = 1-deoxy-D-xylulose 5-phosphate + NADPH + H(+). The protein operates within isoprenoid biosynthesis; isopentenyl diphosphate biosynthesis via DXP pathway; isopentenyl diphosphate from 1-deoxy-D-xylulose 5-phosphate: step 1/6. In terms of biological role, catalyzes the NADPH-dependent rearrangement and reduction of 1-deoxy-D-xylulose-5-phosphate (DXP) to 2-C-methyl-D-erythritol 4-phosphate (MEP). The sequence is that of 1-deoxy-D-xylulose 5-phosphate reductoisomerase from Acinetobacter baumannii (strain ACICU).